Reading from the N-terminus, the 300-residue chain is Ribosomal RNA small subunit methyltransferase H (300 aa).

S-adenosyl-L-methionine-binding positions include Gly46–His48, Asp65, Phe92, Asp107, and Gln114.

The protein belongs to the methyltransferase superfamily. RsmH family.

The protein resides in the cytoplasm. It carries out the reaction cytidine(1402) in 16S rRNA + S-adenosyl-L-methionine = N(4)-methylcytidine(1402) in 16S rRNA + S-adenosyl-L-homocysteine + H(+). In terms of biological role, specifically methylates the N4 position of cytidine in position 1402 (C1402) of 16S rRNA. The protein is Ribosomal RNA small subunit methyltransferase H of Prochlorococcus marinus (strain MIT 9515).